A 322-amino-acid polypeptide reads, in one-letter code: GTP 3',8-cyclase (322 aa).

The Radical SAM core domain occupies 5-217 (SYGRVIDYLR…NIIAQKYSFK (213 aa)). Residue R14 coordinates GTP. Residues C21 and C25 each contribute to the [4Fe-4S] cluster site. Y27 lines the S-adenosyl-L-methionine pocket. A [4Fe-4S] cluster-binding site is contributed by C28. Residue R64 participates in GTP binding. G68 is a binding site for S-adenosyl-L-methionine. Position 95 (T95) interacts with GTP. S-adenosyl-L-methionine is bound at residue S119. K155 contributes to the GTP binding site. S-adenosyl-L-methionine is bound at residue M189. [4Fe-4S] cluster contacts are provided by C249 and C252. Residue 254–256 (RIR) participates in GTP binding. C266 is a [4Fe-4S] cluster binding site.

The protein belongs to the radical SAM superfamily. MoaA family. Monomer and homodimer. [4Fe-4S] cluster serves as cofactor.

It carries out the reaction GTP + AH2 + S-adenosyl-L-methionine = (8S)-3',8-cyclo-7,8-dihydroguanosine 5'-triphosphate + 5'-deoxyadenosine + L-methionine + A + H(+). It participates in cofactor biosynthesis; molybdopterin biosynthesis. Its function is as follows. Catalyzes the cyclization of GTP to (8S)-3',8-cyclo-7,8-dihydroguanosine 5'-triphosphate. The protein is GTP 3',8-cyclase of Campylobacter lari (strain RM2100 / D67 / ATCC BAA-1060).